The following is a 247-amino-acid chain: UPF0246 protein LCABL_22600 (247 aa).

This sequence belongs to the UPF0246 family.

The chain is UPF0246 protein LCABL_22600 from Lacticaseibacillus casei (strain BL23) (Lactobacillus casei).